The primary structure comprises 380 residues: 3-methylitaconate isomerase (380 aa).

Belongs to the PrpF family. In terms of assembly, homotetramer.

It catalyses the reaction 2-methylene-3-methylsuccinate = dimethylmaleate. It functions in the pathway cofactor degradation; nicotinate degradation; propanoate and pyruvate from 6-hydroxynicotinate: step 6/8. Inhibited by oxidized glutathione, p-chloromercuriphenylsulfonic acid and iodoacetic acid. Not inhibited by the chelating agent alpha,alpha-dipyridyl. Activity is slightly increased by EDTA. Not activated by Fe(2+), Mg(2+), Mn(2+) or Ca(2+). Unaffected by K(+), Na(+), NH4(+), Rb(+) or Li(+). Functionally, catalyzes the reversible isomerization of (R)-3-methylitaconate to 2,3-dimethylmaleate. Has very low isomerase activity with itaconate. This chain is 3-methylitaconate isomerase (mii), found in Eubacterium barkeri (Clostridium barkeri).